The sequence spans 299 residues: Ribosomal protein L11 methyltransferase (299 aa).

S-adenosyl-L-methionine-binding residues include Thr144, Gly165, Asp187, and Asn229.

This sequence belongs to the methyltransferase superfamily. PrmA family.

It localises to the cytoplasm. It catalyses the reaction L-lysyl-[protein] + 3 S-adenosyl-L-methionine = N(6),N(6),N(6)-trimethyl-L-lysyl-[protein] + 3 S-adenosyl-L-homocysteine + 3 H(+). Methylates ribosomal protein L11. The protein is Ribosomal protein L11 methyltransferase of Teredinibacter turnerae (strain ATCC 39867 / T7901).